The following is a 421-amino-acid chain: ATP-dependent RNA helicase RhlB (421 aa).

A Q motif motif is present at residues 9–37 (QKFSDFALHPVVVQALEKKGFYNCTPIQA). In terms of domain architecture, Helicase ATP-binding spans 40–219 (LPLTLAGRDV…FEQMNNAEYV (180 aa)). 53–60 (AQTGTGKT) lines the ATP pocket. The DEAD box signature appears at 165-168 (DEAD). The 146-residue stretch at 245–390 (RLLQTLIEEE…VSKYNPDALL (146 aa)) folds into the Helicase C-terminal domain. The interval 390–421 (LSELPPPKRLSRPRTGNGPRRSGAPRNRRRTG) is disordered. Residues 405-414 (GNGPRRSGAP) are compositionally biased toward low complexity.

It belongs to the DEAD box helicase family. RhlB subfamily. In terms of assembly, component of the RNA degradosome, which is a multiprotein complex involved in RNA processing and mRNA degradation.

It is found in the cytoplasm. It carries out the reaction ATP + H2O = ADP + phosphate + H(+). In terms of biological role, DEAD-box RNA helicase involved in RNA degradation. Has RNA-dependent ATPase activity and unwinds double-stranded RNA. The protein is ATP-dependent RNA helicase RhlB of Cronobacter sakazakii (strain ATCC BAA-894) (Enterobacter sakazakii).